The sequence spans 205 residues: MIGKLKGILEHVFDDHIIVDVQGVGYVVFISNRLRPSLPALGESLSLFIETHVREEAIRLFGFVAKAEQEWFCLLQNVPGVGAKVALAILGTLSPDELAQAIALNDIAMISRAPGVGKKVSERIVSELKSKALPFNDNALHFTPQPHLEVTHQPTNDALSALVKLGFERDQAARALALAMNALEGETVSSALLIRHSLKLLSPST.

The domain I stretch occupies residues 1–64 (MIGKLKGILE…EEAIRLFGFV (64 aa)). Positions 65-143 (AKAEQEWFCL…PFNDNALHFT (79 aa)) are domain II. A flexible linker region spans residues 144 to 149 (PQPHLE). The segment at 150–205 (VTHQPTNDALSALVKLGFERDQAARALALAMNALEGETVSSALLIRHSLKLLSPST) is domain III.

The protein belongs to the RuvA family. As to quaternary structure, homotetramer. Forms an RuvA(8)-RuvB(12)-Holliday junction (HJ) complex. HJ DNA is sandwiched between 2 RuvA tetramers; dsDNA enters through RuvA and exits via RuvB. An RuvB hexamer assembles on each DNA strand where it exits the tetramer. Each RuvB hexamer is contacted by two RuvA subunits (via domain III) on 2 adjacent RuvB subunits; this complex drives branch migration. In the full resolvosome a probable DNA-RuvA(4)-RuvB(12)-RuvC(2) complex forms which resolves the HJ.

The protein localises to the cytoplasm. Its function is as follows. The RuvA-RuvB-RuvC complex processes Holliday junction (HJ) DNA during genetic recombination and DNA repair, while the RuvA-RuvB complex plays an important role in the rescue of blocked DNA replication forks via replication fork reversal (RFR). RuvA specifically binds to HJ cruciform DNA, conferring on it an open structure. The RuvB hexamer acts as an ATP-dependent pump, pulling dsDNA into and through the RuvAB complex. HJ branch migration allows RuvC to scan DNA until it finds its consensus sequence, where it cleaves and resolves the cruciform DNA. This Bartonella quintana (strain Toulouse) (Rochalimaea quintana) protein is Holliday junction branch migration complex subunit RuvA.